We begin with the raw amino-acid sequence, 185 residues long: Peptidyl-tRNA hydrolase (185 aa).

TRNA is bound at residue Tyr14. Catalysis depends on His19, which acts as the Proton acceptor. TRNA contacts are provided by Tyr65, Asn67, and Asn113.

The protein belongs to the PTH family. In terms of assembly, monomer.

Its subcellular location is the cytoplasm. The enzyme catalyses an N-acyl-L-alpha-aminoacyl-tRNA + H2O = an N-acyl-L-amino acid + a tRNA + H(+). Functionally, hydrolyzes ribosome-free peptidyl-tRNAs (with 1 or more amino acids incorporated), which drop off the ribosome during protein synthesis, or as a result of ribosome stalling. In terms of biological role, catalyzes the release of premature peptidyl moieties from peptidyl-tRNA molecules trapped in stalled 50S ribosomal subunits, and thus maintains levels of free tRNAs and 50S ribosomes. The sequence is that of Peptidyl-tRNA hydrolase from Rickettsia rickettsii (strain Iowa).